Consider the following 492-residue polypeptide: Cobyric acid synthase (492 aa).

The 189-residue stretch at 252 to 440 (QLNVVVPVLT…LHGIFEQTEA (189 aa)) folds into the GATase cobBQ-type domain. Residue C333 is the Nucleophile of the active site. Residue H432 is part of the active site.

Belongs to the CobB/CobQ family. CobQ subfamily.

It functions in the pathway cofactor biosynthesis; adenosylcobalamin biosynthesis. Functionally, catalyzes amidations at positions B, D, E, and G on adenosylcobyrinic A,C-diamide. NH(2) groups are provided by glutamine, and one molecule of ATP is hydrogenolyzed for each amidation. The protein is Cobyric acid synthase of Photobacterium profundum (strain SS9).